The sequence spans 429 residues: Ribosomal RNA small subunit methyltransferase B (429 aa).

S-adenosyl-L-methionine contacts are provided by residues 254 to 260 (CAAPGGK), aspartate 277, aspartate 303, and aspartate 322. Cysteine 375 functions as the Nucleophile in the catalytic mechanism.

This sequence belongs to the class I-like SAM-binding methyltransferase superfamily. RsmB/NOP family.

It is found in the cytoplasm. The enzyme catalyses cytidine(967) in 16S rRNA + S-adenosyl-L-methionine = 5-methylcytidine(967) in 16S rRNA + S-adenosyl-L-homocysteine + H(+). Specifically methylates the cytosine at position 967 (m5C967) of 16S rRNA. This is Ribosomal RNA small subunit methyltransferase B from Pectobacterium carotovorum subsp. carotovorum (strain PC1).